Consider the following 348-residue polypeptide: Holliday junction branch migration complex subunit RuvB (348 aa).

The tract at residues 4 to 184 is large ATPase domain (RuvB-L); it reads ADRLIAASGR…FGIVQRLEFY (181 aa). ATP-binding positions include isoleucine 23, arginine 24, glycine 65, lysine 68, threonine 69, threonine 70, 131-133, arginine 174, tyrosine 184, and arginine 221; that span reads EDF. Threonine 69 is a Mg(2+) binding site. Residues 185–255 form a small ATPAse domain (RuvB-S) region; sequence SDKDLATIVS…VADLALNLLD (71 aa). Residues 258 to 348 are head domain (RuvB-H); sequence ERGFDHSDRR…GADFSEAGDE (91 aa). Residues arginine 294, arginine 313, and arginine 318 each contribute to the DNA site.

It belongs to the RuvB family. Homohexamer. Forms an RuvA(8)-RuvB(12)-Holliday junction (HJ) complex. HJ DNA is sandwiched between 2 RuvA tetramers; dsDNA enters through RuvA and exits via RuvB. An RuvB hexamer assembles on each DNA strand where it exits the tetramer. Each RuvB hexamer is contacted by two RuvA subunits (via domain III) on 2 adjacent RuvB subunits; this complex drives branch migration. In the full resolvosome a probable DNA-RuvA(4)-RuvB(12)-RuvC(2) complex forms which resolves the HJ.

It is found in the cytoplasm. The catalysed reaction is ATP + H2O = ADP + phosphate + H(+). Functionally, the RuvA-RuvB-RuvC complex processes Holliday junction (HJ) DNA during genetic recombination and DNA repair, while the RuvA-RuvB complex plays an important role in the rescue of blocked DNA replication forks via replication fork reversal (RFR). RuvA specifically binds to HJ cruciform DNA, conferring on it an open structure. The RuvB hexamer acts as an ATP-dependent pump, pulling dsDNA into and through the RuvAB complex. RuvB forms 2 homohexamers on either side of HJ DNA bound by 1 or 2 RuvA tetramers; 4 subunits per hexamer contact DNA at a time. Coordinated motions by a converter formed by DNA-disengaged RuvB subunits stimulates ATP hydrolysis and nucleotide exchange. Immobilization of the converter enables RuvB to convert the ATP-contained energy into a lever motion, pulling 2 nucleotides of DNA out of the RuvA tetramer per ATP hydrolyzed, thus driving DNA branch migration. The RuvB motors rotate together with the DNA substrate, which together with the progressing nucleotide cycle form the mechanistic basis for DNA recombination by continuous HJ branch migration. Branch migration allows RuvC to scan DNA until it finds its consensus sequence, where it cleaves and resolves cruciform DNA. This Pseudomonas putida (strain W619) protein is Holliday junction branch migration complex subunit RuvB.